The following is a 196-amino-acid chain: Transmembrane 4 L6 family member 5 (196 aa).

Topologically, residues 1 to 9 are cytoplasmic; that stretch reads MCTGKCARF. The chain crosses the membrane as a helical span at residues 10–30; that stretch reads VGLSLIPLSLVCIVANALLLV. Residues 31–45 are Extracellular-facing; it reads PNGQTTWTKDHLSLQ. Residues 46-66 traverse the membrane as a helical segment; that stretch reads VWLMAGFVGGGLMVLCPGISA. Topologically, residues 67-89 are cytoplasmic; sequence VRAGGKGCCGAGCCGNRCRMLRS. The chain crosses the membrane as a helical span at residues 90-110; it reads VFCSAIGLLGAIYCLSVSGTG. Residues 90-196 form an interaction with MTOR and CASTOR1 region; the sequence is VFCSAIGLLG…DCRKKQGSSQ (107 aa). At 111–156 the chain is on the extracellular side; that stretch reads LRIGPQCLMNGSWDYHFQDTAGSYLLNRTQWNLCVEPPDVVLWNVT. Asn120 carries N-linked (GlcNAc...) asparagine glycosylation. An L-arginine-binding site is contributed by 123–128; sequence WDYHFQ. 2 N-linked (GlcNAc...) asparagine glycosylation sites follow: Asn137 and Asn154. Residues 157–177 traverse the membrane as a helical segment; it reads LFSLLVAASCLEILLCGVQLV. Over 178-196 the chain is Cytoplasmic; sequence NASIGVLCGDCRKKQGSSQ.

The protein belongs to the L6 tetraspanin family. Interacts with MTOR; the interaction is positively regulated by arginine and is negatively regulated by leucine. Interacts with SLC38A9. Interacts with SLC7A1; the interaction is negatively regulated by arginine. Interacts with CASTOR1; the interaction is positively regulated by leucine and is negatively regulated by arginine.

It is found in the lysosome membrane. The protein localises to the cell membrane. Its function is as follows. Acts as a lysosomal membrane arginine sensor. Forms a complex with MTOR and SLC38A9 on lysosomal membranes in an arginine-regulated manner, leading to arginine efflux which enables the activation of mTORC1 which subsequently leads to RPS6KB1 and EIF4EBP1 phosphorylations. Facilitates cell cycle G1/S phase progression and the translocation of the CDK4-CCND1 complex into the nucleus. CDKN1B and RHOA/ROCK signaling activity are involved in TM4SF5-mediated acceleration of G1/S phase progression. The protein is Transmembrane 4 L6 family member 5 (TM4SF5) of Bos taurus (Bovine).